A 78-amino-acid chain; its full sequence is Small ribosomal subunit protein uS17 (78 aa).

It belongs to the universal ribosomal protein uS17 family. In terms of assembly, part of the 30S ribosomal subunit.

In terms of biological role, one of the primary rRNA binding proteins, it binds specifically to the 5'-end of 16S ribosomal RNA. The polypeptide is Small ribosomal subunit protein uS17 (Agrobacterium fabrum (strain C58 / ATCC 33970) (Agrobacterium tumefaciens (strain C58))).